A 435-amino-acid polypeptide reads, in one-letter code: Methylenetetrahydrofolate--tRNA-(uracil-5-)-methyltransferase TrmFO (435 aa).

Position 7 to 12 (7 to 12) interacts with FAD; it reads GAGLAG.

The protein belongs to the MnmG family. TrmFO subfamily. Requires FAD as cofactor.

The protein resides in the cytoplasm. The catalysed reaction is uridine(54) in tRNA + (6R)-5,10-methylene-5,6,7,8-tetrahydrofolate + NADH + H(+) = 5-methyluridine(54) in tRNA + (6S)-5,6,7,8-tetrahydrofolate + NAD(+). It carries out the reaction uridine(54) in tRNA + (6R)-5,10-methylene-5,6,7,8-tetrahydrofolate + NADPH + H(+) = 5-methyluridine(54) in tRNA + (6S)-5,6,7,8-tetrahydrofolate + NADP(+). In terms of biological role, catalyzes the folate-dependent formation of 5-methyl-uridine at position 54 (M-5-U54) in all tRNAs. This is Methylenetetrahydrofolate--tRNA-(uracil-5-)-methyltransferase TrmFO from Thermotoga neapolitana (strain ATCC 49049 / DSM 4359 / NBRC 107923 / NS-E).